The primary structure comprises 300 residues: MENKHIPILLNEAIKSLNIKSDGIYLDLTVGMGGHSSEILKRLKNGLLVGFDKDLFAIEESRKRLSKIGSNFQLIHSDFNNVADELAKLNINAVDGILVDLGISSPQVDNAERGFSYSKDARLDMRMNTNQALDAHFVVNTYSEDELITIFYNYAEVKLAKQVANAIIKNRPINTTLELAEVIKSAYPAKLLSLKNPCKAVFQAIRIEVNNEFSSINSMLVQALNLLKKDSSLAIITFHSLEDSIIKKFFGNLIKSKHPSKMPIKEEKKYIVKVYSPSKAEISENNRSRSAKLRVLTKLI.

Residues 33 to 35 (GGH), aspartate 52, phenylalanine 79, aspartate 100, and glutamine 107 contribute to the S-adenosyl-L-methionine site.

This sequence belongs to the methyltransferase superfamily. RsmH family.

It is found in the cytoplasm. The enzyme catalyses cytidine(1402) in 16S rRNA + S-adenosyl-L-methionine = N(4)-methylcytidine(1402) in 16S rRNA + S-adenosyl-L-homocysteine + H(+). Functionally, specifically methylates the N4 position of cytidine in position 1402 (C1402) of 16S rRNA. This chain is Ribosomal RNA small subunit methyltransferase H, found in Mycoplasmopsis agalactiae (strain NCTC 10123 / CIP 59.7 / PG2) (Mycoplasma agalactiae).